A 69-amino-acid chain; its full sequence is Brevinin-1Pb (69 aa).

A signal peptide spans 1–20; it reads MFTLNKFLLLLFFLGTINLS. The propeptide occupies 21–43; the sequence is FCEEENAEEERIDEPDETDVEVE. The cysteines at positions 63 and 69 are disulfide-linked.

As to expression, expressed by the skin glands.

Its subcellular location is the secreted. Its function is as follows. Antibacterial activity against Gram-positive bacterium S.aureus and Gram-negative bacterium E.coli. Has activity against C.albicans. The sequence is that of Brevinin-1Pb from Lithobates pipiens (Northern leopard frog).